A 312-amino-acid polypeptide reads, in one-letter code: Probable deoxyhypusine synthase (312 aa).

Catalysis depends on Lys-285, which acts as the Nucleophile.

Belongs to the deoxyhypusine synthase family. Requires NAD(+) as cofactor.

It carries out the reaction [eIF5A protein]-L-lysine + spermidine = [eIF5A protein]-deoxyhypusine + propane-1,3-diamine. The protein operates within protein modification; eIF5A hypusination. Functionally, catalyzes the NAD-dependent oxidative cleavage of spermidine and the subsequent transfer of the butylamine moiety of spermidine to the epsilon-amino group of a specific lysine residue of the eIF-5A precursor protein to form the intermediate deoxyhypusine residue. In Saccharolobus islandicus (strain Y.N.15.51 / Yellowstone #2) (Sulfolobus islandicus), this protein is Probable deoxyhypusine synthase.